Here is a 749-residue protein sequence, read N- to C-terminus: 5-methyltetrahydropteroyltriglutamate--homocysteine methyltransferase (749 aa).

5-methyltetrahydropteroyltri-L-glutamate contacts are provided by residues 15 to 18 (RELK) and Lys114. Residues 425 to 427 (IGS) and Glu478 each bind L-homocysteine. L-methionine-binding positions include 425–427 (IGS) and Glu478. Trp555 contributes to the 5-methyltetrahydropteroyltri-L-glutamate binding site. Asp593 is an L-homocysteine binding site. Residue Asp593 participates in L-methionine binding. Residue Glu599 coordinates 5-methyltetrahydropteroyltri-L-glutamate. Residues His636, Cys638, and Glu660 each contribute to the Zn(2+) site. Catalysis depends on His689, which acts as the Proton donor. Cys721 contributes to the Zn(2+) binding site.

It belongs to the vitamin-B12 independent methionine synthase family. It depends on Zn(2+) as a cofactor.

The enzyme catalyses 5-methyltetrahydropteroyltri-L-glutamate + L-homocysteine = tetrahydropteroyltri-L-glutamate + L-methionine. It participates in amino-acid biosynthesis; L-methionine biosynthesis via de novo pathway; L-methionine from L-homocysteine (MetE route): step 1/1. Catalyzes the transfer of a methyl group from 5-methyltetrahydrofolate to homocysteine resulting in methionine formation. The protein is 5-methyltetrahydropteroyltriglutamate--homocysteine methyltransferase of Streptococcus thermophilus (strain ATCC BAA-491 / LMD-9).